The sequence spans 60 residues: Large ribosomal subunit protein bL32 (60 aa).

The span at 1–23 (MAKHPVPKKKTSKSKRDMRRSHH) shows a compositional bias: basic residues. Positions 1–34 (MAKHPVPKKKTSKSKRDMRRSHHALTAPNLTECP) are disordered. Residues C33, C36, C46, and C49 each coordinate Zn(2+). The C4-type zinc finger occupies 33–49 (CPQCHGKKLSHHICPNC).

It belongs to the bacterial ribosomal protein bL32 family. In terms of assembly, part of the 50S ribosomal subunit. Contacts proteins L17 and L22. Zn(2+) is required as a cofactor.

Forms a cluster with L17 and L22, and with L22, a pair of 'tweezers' that hold together all the domains of the 23S rRNA. Interacts with the antibiotic troleandomycin which blocks the peptide exit tunnel. The chain is Large ribosomal subunit protein bL32 (rpmF) from Deinococcus radiodurans (strain ATCC 13939 / DSM 20539 / JCM 16871 / CCUG 27074 / LMG 4051 / NBRC 15346 / NCIMB 9279 / VKM B-1422 / R1).